Here is a 449-residue protein sequence, read N- to C-terminus: Asparagine--tRNA ligase (449 aa).

It belongs to the class-II aminoacyl-tRNA synthetase family. In terms of assembly, homodimer.

It is found in the cytoplasm. It carries out the reaction tRNA(Asn) + L-asparagine + ATP = L-asparaginyl-tRNA(Asn) + AMP + diphosphate + H(+). This Deinococcus geothermalis (strain DSM 11300 / CIP 105573 / AG-3a) protein is Asparagine--tRNA ligase.